The chain runs to 451 residues: MKTKLSTCNVWSLLLVLLVWDPVRLVLANIQEDEAKNNITIFTRILDRLLDGYDNRLRPGLGDSITEVFTNIYVTSFGPVSDTDMEYTIDVFFRQKWKDERLKFKGPMNILRLNNLMASKIWTPDTFFHNGKKSVAHNMTMPNKLLRIQDDGTLLYTMRLTVQAECPMHLEDFPMDAHSCPLKFGSYAYTTSEVTYIWTYNASDSVQVAPDGSRLNQYDLLGQSIGKETIKSSTGEYTVMTAHFHLKRKIGYFVIQTYLPCIMTVILSQVSFWLNRESVPARTVFGVTTVLTMTTLSISARNSLPKVAYATAMDWFIAVCYAFVFSALIEFATVNYFTKRGWAWDGKSVVNDKKKEKGSVMIQNNAYAVAVANYAPNLSKDPVLSTISKSATTPEPNKKPENKPAEAKKTFNSVSKIDRMSRIVFPVLFGTFNLVYWATYLNREPVLGVSP.

Residues 1–28 (MKTKLSTCNVWSLLLVLLVWDPVRLVLA) form the signal peptide. Over 29-249 (NIQEDEAKNN…MTAHFHLKRK (221 aa)) the chain is Extracellular. A glycan (N-linked (GlcNAc...) asparagine) is linked at asparagine 38. Arginine 94 lines the 4-aminobutanoate pocket. N-linked (GlcNAc...) asparagine glycosylation occurs at asparagine 138. Threonine 157 provides a ligand contact to 4-aminobutanoate. Cysteine 166 and cysteine 180 are oxidised to a cystine. The helical transmembrane segment at 250–270 (IGYFVIQTYLPCIMTVILSQV) threads the bilayer. Topologically, residues 271–280 (SFWLNRESVP) are cytoplasmic. A helical membrane pass occupies residues 281–300 (ARTVFGVTTVLTMTTLSISA). Residues 301 to 311 (RNSLPKVAYAT) are Extracellular-facing. A helical transmembrane segment spans residues 312 to 332 (AMDWFIAVCYAFVFSALIEFA). Over 333–420 (TVNYFTKRGW…FNSVSKIDRM (88 aa)) the chain is Cytoplasmic. The disordered stretch occupies residues 389 to 408 (KSATTPEPNKKPENKPAEAK). Over residues 396–408 (PNKKPENKPAEAK) the composition is skewed to basic and acidic residues. Residues 421–441 (SRIVFPVLFGTFNLVYWATYL) form a helical membrane-spanning segment. Residues 442 to 451 (NREPVLGVSP) lie on the Extracellular side of the membrane.

This sequence belongs to the ligand-gated ion channel (TC 1.A.9) family. Gamma-aminobutyric acid receptor (TC 1.A.9.5) subfamily. GABRA2 sub-subfamily. Heteropentamer, formed by a combination of alpha (GABRA1-6), beta (GABRB1-3), gamma (GABRG1-3), delta (GABRD), epsilon (GABRE), rho (GABRR1-3), pi (GABRP) and theta (GABRQ) subunits, each subunit exhibiting distinct physiological and pharmacological properties. Interacts with UBQLN1. Interacts with KIF21B. Interacts with LHFPL4. Interacts with SHISA7; interaction leads to the regulation of GABA(A) receptor trafficking, channel deactivation kinetics and pharmacology. In terms of processing, glycosylated.

It localises to the postsynaptic cell membrane. Its subcellular location is the cell membrane. The protein resides in the cytoplasmic vesicle membrane. The protein localises to the cell projection. It is found in the dendrite. It carries out the reaction chloride(in) = chloride(out). Its activity is regulated as follows. Activated by pentobarbital. Inhibited by the antagonist bicuculline. Functionally, alpha subunit of the heteropentameric ligand-gated chloride channel gated by gamma-aminobutyric acid (GABA), a major inhibitory neurotransmitter in the brain. GABA-gated chloride channels, also named GABA(A) receptors (GABAAR), consist of five subunits arranged around a central pore and contain GABA active binding site(s) located at the alpha and beta subunit interface(s). When activated by GABA, GABAARs selectively allow the flow of chloride anions across the cell membrane down their electrochemical gradient. Chloride influx into the postsynaptic neuron following GABAAR opening decreases the neuron ability to generate a new action potential, thereby reducing nerve transmission. The alpha-2 subunit exhibits synaptogenic activity together with beta-2 and very little to no activity together with beta-3, the gamma-2 subunit being necessary but not sufficient to induce rapid synaptic contacts formation. The chain is Gamma-aminobutyric acid receptor subunit alpha-2 from Mus musculus (Mouse).